Here is a 487-residue protein sequence, read N- to C-terminus: MYTQRMFDMWSSVTSKLEAHANNLGQSNVQSPAGQNNSSGSIKAQIEIIPCKVCGDKSSGVHYGVITCEGCKGFFRRSQSSVVNYQCPRNKQCVVDRVNRNRCQYCRLQKCLKLGMSRDAVKFGRMSKKQREKVEDEVRFHRAQMRAQSDAAPDSSVYDTQTPSSSDQLHHNNYNSYSGGYSNNEVGYGSPYGYSASVTPQQTMQYDISADYVDSTTYEPRSTIIDPEFISHADGDINDVLIKTLAEAHANTNTKLEAVHDMFRKQPDVSRILYYKNLGQEELWLDCAEKLTQMIQNIIEFAKLIPGFMRLSQDDQILLLKTGSFELAIVRMSRLLDLSQNAVLYGDVMLPQEAFYTSDSEEMRLVSRIFQTAKSIAELKLTETELALYQSLVLLWPERNGVRGNTEIQRLFNLSMNAIRQELETNHAPLKGDVTVLDTLLNNIPNFRDISILHMESLSKFKLQHPNVVFPALYKELFSIDSQQDLT.

The segment at residues 48–123 (IIPCKVCGDK…LGMSRDAVKF (76 aa)) is a DNA-binding region (nuclear receptor). 2 NR C4-type zinc fingers span residues 51 to 71 (CKVCGDKSSGVHYGVITCEGC) and 87 to 111 (CPRNKQCVVDRVNRNRCQYCRLQKC). A disordered region spans residues 145-176 (MRAQSDAAPDSSVYDTQTPSSSDQLHHNNYNS). Positions 157 to 167 (VYDTQTPSSSD) are enriched in polar residues. An NR LBD domain is found at 237-480 (INDVLIKTLA…PALYKELFSI (244 aa)).

The protein belongs to the nuclear hormone receptor family. NR1 subfamily.

The protein resides in the nucleus. Putative receptor whose ligand is not yet known. The sequence is that of Probable nuclear hormone receptor HR3 from Drosophila melanogaster (Fruit fly).